A 248-amino-acid polypeptide reads, in one-letter code: Methionine aminopeptidase (248 aa).

Position 77 (His77) interacts with substrate. Residues Asp94, Asp105, and His169 each contribute to the a divalent metal cation site. His176 lines the substrate pocket. Glu202 and Glu233 together coordinate a divalent metal cation.

Belongs to the peptidase M24A family. Methionine aminopeptidase type 1 subfamily. Monomer. The cofactor is Co(2+). Requires Zn(2+) as cofactor. It depends on Mn(2+) as a cofactor. Fe(2+) serves as cofactor.

The enzyme catalyses Release of N-terminal amino acids, preferentially methionine, from peptides and arylamides.. Its function is as follows. Removes the N-terminal methionine from nascent proteins. The N-terminal methionine is often cleaved when the second residue in the primary sequence is small and uncharged (Met-Ala-, Cys, Gly, Pro, Ser, Thr, or Val). Requires deformylation of the N(alpha)-formylated initiator methionine before it can be hydrolyzed. This is Methionine aminopeptidase from Mycoplasma genitalium (strain ATCC 33530 / DSM 19775 / NCTC 10195 / G37) (Mycoplasmoides genitalium).